Consider the following 275-residue polypeptide: Phosphate import ATP-binding protein PstB 1 (275 aa).

Residues 22–261 (LETQAVSVYY…NRTEKIFNSP (240 aa)) form the ABC transporter domain. Position 54-61 (54-61 (GPSGCGKS)) interacts with ATP.

Belongs to the ABC transporter superfamily. Phosphate importer (TC 3.A.1.7) family. As to quaternary structure, the complex is composed of two ATP-binding proteins (PstB), two transmembrane proteins (PstC and PstA) and a solute-binding protein (PstS).

It is found in the cell inner membrane. The enzyme catalyses phosphate(out) + ATP + H2O = ADP + 2 phosphate(in) + H(+). In terms of biological role, part of the ABC transporter complex PstSACB involved in phosphate import. Responsible for energy coupling to the transport system. This chain is Phosphate import ATP-binding protein PstB 1, found in Synechococcus sp. (strain JA-2-3B'a(2-13)) (Cyanobacteria bacterium Yellowstone B-Prime).